The following is a 266-amino-acid chain: Chymotrypsin-like elastase family member 1 (266 aa).

An N-terminal signal peptide occupies residues 1-16 (MLRFLVFASLVLCGHS). The propeptide at 17–26 (TEDVPETDAR) is activation peptide. The Peptidase S1 domain maps to 27 to 264 (VVGGAEARRN…YISWMNNVIA (238 aa)). Cysteine 56 and cysteine 72 are oxidised to a cystine. Histidine 71 (charge relay system) is an active-site residue. Positions 85, 87, 90, and 95 each coordinate Ca(2+). A glycan (N-linked (GlcNAc...) asparagine) is linked at asparagine 87. The active-site Charge relay system is aspartate 119. Cystine bridges form between cysteine 153–cysteine 220, cysteine 184–cysteine 200, and cysteine 210–cysteine 240. Catalysis depends on serine 214, which acts as the Charge relay system.

The protein belongs to the peptidase S1 family. Elastase subfamily. It depends on Ca(2+) as a cofactor.

Its subcellular location is the secreted. It carries out the reaction Hydrolysis of proteins, including elastin. Preferential cleavage: Ala-|-Xaa.. Its function is as follows. Serine proteases that hydrolyze many proteins in addition to elastin. The sequence is that of Chymotrypsin-like elastase family member 1 (Cela1) from Mus musculus (Mouse).